Consider the following 141-residue polypeptide: Protein X (141 aa).

Residues 24 to 48 (QSSGPPFPRPSAGSAASPASSLSAS) are compositionally biased toward low complexity. The segment at 24-51 (QSSGPPFPRPSAGSAASPASSLSASDES) is disordered. Residues 68–113 (PCCLVVTCAELRTMDSTVNFVSWHANRQLGMPSKDLWTPYIRDQLL) are mitochondrial targeting sequence.

Belongs to the orthohepadnavirus protein X family. As to quaternary structure, may form homodimer. May interact with host CEBPA, CFLAR, CREB1, DDB1, E4F1, HBXIP, HSPD1/HSP60, NFKBIA, POLR2E and SMAD4. Interacts with host SMC5-SMC6 complex and induces its degradation. Interacts with host TRPC4AP; leading to prevent ubiquitination of TRPC4AP. Interacts with host PLSCR1; this interaction promotes ubiquitination and degradation of HBx and impairs HBx-mediated cell proliferation. In terms of processing, a fraction may be phosphorylated in insect cells and HepG2 cells, a human hepatoblastoma cell line. Phosphorylated in vitro by host protein kinase C or mitogen-activated protein kinase. N-acetylated in insect cells.

It localises to the host cytoplasm. Its subcellular location is the host nucleus. It is found in the host mitochondrion. In terms of biological role, multifunctional protein that plays a role in silencing host antiviral defenses and promoting viral transcription. Does not seem to be essential for HBV infection. May be directly involved in development of cirrhosis and liver cancer (hepatocellular carcinoma). Most of cytosolic activities involve modulation of cytosolic calcium. The effect on apoptosis is controversial depending on the cell types in which the studies have been conducted. May induce apoptosis by localizing in mitochondria and causing loss of mitochondrial membrane potential. May also modulate apoptosis by binding host CFLAR, a key regulator of the death-inducing signaling complex (DISC). Promotes viral transcription by using the host E3 ubiquitin ligase DDB1 to target the SMC5-SMC6 complex to proteasomal degradation. This host complex would otherwise bind to viral episomal DNA, and prevents its transcription. Moderately stimulates transcription of many different viral and cellular transcription elements. Promoters and enhancers stimulated by HBx contain DNA binding sites for NF-kappa-B, AP-1, AP-2, c-EBP, ATF/CREB, or the calcium-activated factor NF-AT. This is Protein X from Woodchuck hepatitis B virus (isolate 1) (WHV).